A 410-amino-acid chain; its full sequence is MDKLLDRFLNYVSFDTQSKSGVRQVPSTDGQLKLARALQQELLELGFEQIVLSKQGCLTAALPSNVAWSVPAIGFISHMDTSPDFSGKNVNPQILENYRGGDIALGVGDEVLSPVMFPVLHQLLGHTLITTDGKTLLGADDKAGIAEIITALVRLKKSQLPHGDIRIAFTPDEEIGKGAQFFDVKAFNAQWAYTVDGGGVGELEYENFNAASVQVKIVGNNVHPGSAKGVMVNALTLASRYHQHVPESESPEQTEGYQGFYHLHSMKGSVERADLHYIVRDFDRNGFEQRKQTMLDIAEKVGAGLHPDCYIEVTITDTYYNMREQVEQHPHIIALAQQAMRDCSIEPNMKPIRGGTDGAHLSFQGLPCPNLFTGGYNYHGKHEFVTLEGMEKAVSVIMRIAELTALRAKP.

Zn(2+) is bound at residue histidine 78. Aspartate 80 is an active-site residue. Position 140 (aspartate 140) interacts with Zn(2+). The Proton acceptor role is filled by glutamate 173. Residues glutamate 174, aspartate 196, and histidine 379 each contribute to the Zn(2+) site.

Belongs to the peptidase M20B family. Requires Zn(2+) as cofactor.

It is found in the cytoplasm. It carries out the reaction Release of the N-terminal residue from a tripeptide.. In terms of biological role, cleaves the N-terminal amino acid of tripeptides. The sequence is that of Peptidase T from Pectobacterium atrosepticum (strain SCRI 1043 / ATCC BAA-672) (Erwinia carotovora subsp. atroseptica).